A 664-amino-acid polypeptide reads, in one-letter code: Intraflagellar transport protein 70A2 (664 aa).

TPR repeat units follow at residues Asp-11–Ser-44, Arg-45–Leu-78, Pro-153–Gln-186, Asp-188–Gln-220, Gln-395–Ile-423, Pro-424–His-456, and Val-458–Asn-491. Residues Tyr-507–Asp-534 are a coiled coil. Residues Cys-543–Lys-576 form a TPR 8 repeat.

This sequence belongs to the TTC30/dfy-1/fleer family. As to quaternary structure, interacts wit the IFT B complex component IFT52.

The protein localises to the cell projection. The protein resides in the cilium. In terms of biological role, required for polyglutamylation of axonemal tubulin. Plays a role in anterograde intraflagellar transport (IFT), the process by which cilia precursors are transported from the base of the cilium to the site of their incorporation at the tip. The chain is Intraflagellar transport protein 70A2 (Ift70a2) from Mus musculus (Mouse).